The chain runs to 454 residues: Notoamide E oxidase notB (454 aa).

The chain crosses the membrane as a helical span at residues 15-35 (SPAELTVIIVGLGIAGLTAAI). FAD is bound by residues Glu48 and Gly61. Asn75 is a glycosylation site (N-linked (GlcNAc...) asparagine). Arg121 serves as a coordination point for FAD. Active-site residues include Arg199 and Tyr229. Residues Asp322 and Gly335 each contribute to the FAD site.

It belongs to the paxM FAD-dependent monooxygenase family. FAD serves as cofactor.

The protein localises to the membrane. It catalyses the reaction notoamide E + NADPH + O2 + H(+) = notoamide C + NADP(+) + H2O. It carries out the reaction notoamide E + NADPH + O2 + H(+) = notoamide D + NADP(+) + H2O. It participates in alkaloid biosynthesis. In terms of biological role, FAD-dependent monooxygenase; part of the gene cluster that mediates the biosynthesis of notoamide, a fungal indole alkaloid that belongs to a family of natural products containing a characteristic bicyclo[2.2.2]diazaoctane core. The first step of notoamide biosynthesis involves coupling of L-proline and L-tryptophan by the bimodular NRPS notE, to produce cyclo-L-tryptophan-L-proline called brevianamide F. The reverse prenyltransferase notF then acts as a deoxybrevianamide E synthase and converts brevianamide F to deoxybrevianamide E via reverse prenylation at C-2 of the indole ring leading to the bicyclo[2.2.2]diazaoctane core. Deoxybrevianamide E is further hydroxylated at C-6 of the indole ring, likely catalyzed by the cytochrome P450 monooxygenase notG, to yield 6-hydroxy-deoxybrevianamide E. 6-hydroxy-deoxybrevianamide E is a specific substrate of the prenyltransferase notC for normal prenylation at C-7 to produce 6-hydroxy-7-prenyl-deoxybrevianamide, also called notoamide S. As the proposed pivotal branching point in notoamide biosynthesis, notoamide S can be diverted to notoamide E through an oxidative pyran ring closure putatively catalyzed by either notH cytochrome P450 monooxygenase or the notD FAD-linked oxidoreductase. This step would be followed by an indole 2,3-epoxidation-initiated pinacol-like rearrangement catalyzed by the notB FAD-dependent monooxygenase leading to the formation of notoamide C and notoamide D. On the other hand notoamide S is converted to notoamide T by notH (or notD), a bifunctional oxidase that also functions as the intramolecular Diels-Alderase responsible for generation of (+)-notoamide T. To generate antipodal (-)-notoaminide T, notH' (or notD') in Aspergillus versicolor is expected to catalyze a Diels-Alder reaction leading to the opposite stereochemistry. The remaining oxidoreductase notD (or notH) likely catalyzes the oxidative pyran ring formation to yield (+)-stephacidin A. The FAD-dependent monooxygenase notI is highly similar to notB and is predicted to catalyze a similar conversion from (+)-stephacidin A to (-)-notoamide B via the 2,3-epoxidation of (+)-stephacidin A followed by a pinacol-type rearrangement. Finally, it remains unclear which enzyme could be responsible for the final hydroxylation steps leading to notoamide A and sclerotiamide. This Aspergillus sp. (strain MF297-2) protein is Notoamide E oxidase notB.